The following is a 385-amino-acid chain: Single-stranded DNA-binding protein 4 (385 aa).

Met-1 carries the post-translational modification N-acetylmethionine. The 33-residue stretch at 17-49 folds into the LisH domain; the sequence is AREKLALYVYEYLLHIGAQKSAQTFLSEIRWEK. 2 disordered regions span residues 122–287 and 331–363; these read FQGP…NSSE and GSGD…GEMA. Positions 245–263 are enriched in low complexity; the sequence is SPSGNSIPYSSSSPGSYTG. Pro residues predominate over residues 267–277; it reads GGGPPGTPIMP. Ser-341 carries the post-translational modification Phosphoserine. Residue Thr-355 is modified to Phosphothreonine.

The protein localises to the nucleus. This Homo sapiens (Human) protein is Single-stranded DNA-binding protein 4 (SSBP4).